The primary structure comprises 113 residues: UPF0482 protein YnfB (113 aa).

The N-terminal stretch at 1–28 (MKITLSKRIGLLAFLLPCALALSTTVHA) is a signal peptide.

It belongs to the UPF0482 family.

This chain is UPF0482 protein YnfB, found in Escherichia coli O127:H6 (strain E2348/69 / EPEC).